The sequence spans 445 residues: MDLRTPKGTHDYGPRECYLLNRFLRAVTEVFETHGAACIDTPTFELRELLCNKYGDESRLIFDLADQGGDICSLRYDLTVSFARFLAKHRVQRLKRFQIGKVFRRDQPSVSKGRLREFVQCDLDIAGAYMEMVADAEAICIMSECLDRVGHRYQIRISSRKILNALMEHSGIGRNNFATVCSTIDKMDRLPWADIAAELRTKGLVDGQVAVLKRYVCVSGGIEVIDTLRSGELYLYSDGKKGIDDLALLFKYLGIYGVGDRAVVDLSLARGLDYYTGVIFEAALVDFKDVGSVAGGGRYDNLVSSVLGKKSEWSVPCVGFSLGVTRILSVMLKVDRRRTTETEVFVGSSGGLLLEERMGVLSRLWRAGVAAETFYTRKYGYASLMEHVRKTDIPFFLLVGEKEIAENRFRLMYGEDRALQMYGDIDTIVNFIKSHRAGQRPPAGL.

This sequence belongs to the class-II aminoacyl-tRNA synthetase family.

The protein localises to the cytoplasm. It carries out the reaction tRNA(His) + L-histidine + ATP = L-histidyl-tRNA(His) + AMP + diphosphate + H(+). This chain is Probable histidine--tRNA ligase, cytoplasmic, found in Antonospora locustae (Microsporidian parasite).